The sequence spans 480 residues: 6-phosphogluconate dehydrogenase, decarboxylating (480 aa).

NADP(+) is bound by residues Gly-11–Gly-16, Asn-34–Ser-36, Ile-76–Ala-78, and Asn-104. Residues Asn-104 and Ser-130–Gly-132 each bind substrate. Catalysis depends on Lys-184, which acts as the Proton acceptor. His-187–Asn-188 contacts substrate. Glu-191 (proton donor) is an active-site residue. Tyr-192, Lys-261, Arg-288, Arg-448, and His-454 together coordinate substrate.

It belongs to the 6-phosphogluconate dehydrogenase family. Homodimer.

It carries out the reaction 6-phospho-D-gluconate + NADP(+) = D-ribulose 5-phosphate + CO2 + NADPH. It functions in the pathway carbohydrate degradation; pentose phosphate pathway; D-ribulose 5-phosphate from D-glucose 6-phosphate (oxidative stage): step 3/3. In terms of biological role, catalyzes the oxidative decarboxylation of 6-phosphogluconate to ribulose 5-phosphate and CO(2), with concomitant reduction of NADP to NADPH. The chain is 6-phosphogluconate dehydrogenase, decarboxylating (gnd) from Chlamydia trachomatis serovar D (strain ATCC VR-885 / DSM 19411 / UW-3/Cx).